Consider the following 821-residue polypeptide: Maternal DNA replication licensing factor mcm6 (821 aa).

The segment at 159 to 186 (CMDCQSVVKDVEQQFRYTQPTICKNPVC) adopts a C4-type zinc-finger fold. The MCM domain occupies 347 to 554 (LYHNLCTSLF…TDYAIARRIV (208 aa)). Position 397–404 (397–404 (GDPSTSKS)) interacts with ATP. The Arginine finger motif lies at 529-532 (SRFD).

It belongs to the MCM family. Component of the mcm2-7 complex (RLF-M). The complex forms a toroidal hexameric ring with the proposed subunit order mcm2-mcm6-mcm4-mcm7-mcm3-mcm5. The heterodimer of mmcm3/mcm5 interacts with mcm4, mmcm6, mcm7 and weakly with mcm2. Component of the CMG helicase complex, composed of the mcm2-7 complex, the GINS complex and cdc45.

The protein resides in the nucleus. It localises to the chromosome. It carries out the reaction ATP + H2O = ADP + phosphate + H(+). Its function is as follows. Acts as a component of the mcm2-7 complex (mcm complex) which is the putative replicative helicase essential for 'once per cell cycle' DNA replication initiation and elongation in eukaryotic cells. The active ATPase sites in the mcm2-7 ring are formed through the interaction surfaces of two neighboring subunits such that a critical structure of a conserved arginine finger motif is provided in trans relative to the ATP-binding site of the Walker A box of the adjacent subunit. The six ATPase active sites, however, are likely to contribute differentially to the complex helicase activity. The existence of maternal and zygotic forms of mcm3 and mcm6 suggests that specific forms of mcm2-7 complexes may be used during different stages of development. This is Maternal DNA replication licensing factor mcm6 from Xenopus tropicalis (Western clawed frog).